The following is a 351-amino-acid chain: Alcohol dehydrogenase 5 (351 aa).

The Zn(2+) site is built by Cys-47, His-70, Cys-101, Cys-104, Cys-107, Cys-115, and Cys-183. NAD(+)-binding positions include 181–187 (GACGGLG), Asp-205, Lys-210, 272–274 (VGM), and Arg-344.

This sequence belongs to the zinc-containing alcohol dehydrogenase family. It depends on Zn(2+) as a cofactor.

The catalysed reaction is a primary alcohol + NAD(+) = an aldehyde + NADH + H(+). The enzyme catalyses a secondary alcohol + NAD(+) = a ketone + NADH + H(+). This chain is Alcohol dehydrogenase 5 (ADH5), found in Saccharomyces pastorianus (Lager yeast).